A 443-amino-acid chain; its full sequence is Tubulin epsilon and delta complex protein 2 (443 aa).

Residues arginine 8 to arginine 33 adopt a coiled-coil conformation. Disordered stretches follow at residues alanine 45 to glutamine 72 and glycine 93 to proline 146. Residues leucine 106–serine 124 show a composition bias toward low complexity.

In terms of assembly, interacts with TEDC1. Found in a complex with TEDC1, TEDC2, TUBE1 and TUBD1.

Its subcellular location is the cell projection. The protein localises to the cilium. It is found in the cytoplasm. It localises to the cytoskeleton. The protein resides in the microtubule organizing center. Its subcellular location is the centrosome. The protein localises to the centriole. In terms of biological role, acts as a positive regulator of ciliary hedgehog signaling. Required for centriole stability. This is Tubulin epsilon and delta complex protein 2 from Bos taurus (Bovine).